Reading from the N-terminus, the 254-residue chain is Uridine-cytidine kinase 1 (254 aa).

The interval 1 to 29 (MASAGGDECEGAAPEADRPHQRPFLIGVS) is disordered. 30–38 (GGTASGKST) is an ATP binding site. Positions 87, 115, 120, 146, 155, and 163 each coordinate substrate. Asp-192 provides a ligand contact to ATP. The disordered stretch occupies residues 224–254 (SYKRTFSEPGDHPGMLTSGKRSHLESSSRPH). Thr-228 carries the phosphothreonine modification. A Phosphoserine modification is found at Ser-230. The span at 245–254 (SHLESSSRPH) shows a compositional bias: basic and acidic residues.

The protein belongs to the uridine kinase family.

It carries out the reaction uridine + ATP = UMP + ADP + H(+). The enzyme catalyses cytidine + ATP = CMP + ADP + H(+). It participates in pyrimidine metabolism; CTP biosynthesis via salvage pathway; CTP from cytidine: step 1/3. It functions in the pathway pyrimidine metabolism; UMP biosynthesis via salvage pathway; UMP from uridine: step 1/1. Functionally, phosphorylates uridine and cytidine to uridine monophosphate and cytidine monophosphate. Does not phosphorylate deoxyribonucleosides or purine ribonucleosides. Can use ATP or GTP as a phosphate donor. This Macaca fascicularis (Crab-eating macaque) protein is Uridine-cytidine kinase 1 (UCK1).